Reading from the N-terminus, the 104-residue chain is MFKKGLLALALVFSLPVFAAEHWIDVRVPEQYQQEHVQGAINIPLKEVKERIATAVPDKNDTVKVYCNAGRQSGQAKEILSEMGYTHVENAGGLKDIAMPKVKG.

The signal sequence occupies residues 1–19 (MFKKGLLALALVFSLPVFA). The region spanning 20-104 (AEHWIDVRVP…KDIAMPKVKG (85 aa)) is the Rhodanese domain. The active-site Cysteine persulfide intermediate is Cys67.

Monomer.

It localises to the periplasm. The enzyme catalyses thiosulfate + hydrogen cyanide = thiocyanate + sulfite + 2 H(+). Its activity is regulated as follows. Inhibited by thiosulfate above 100 mM, particularly at low cyanide concentrations (&lt;5 mM). Inhibited by sodium sulfate or sodium chloride at 0.25 M which gives around 50% inhibition of rhodanese activity. Addition of sodium phosphate at the same concentration results in about 65% inhibition. Sulfite strongly inhibits PspE activity (1 mM sodium sulfite resulted in more than 50% inhibition of rhodanese activity). Its function is as follows. The phage shock protein (psp) operon (pspABCDE) may play a significant role in the competition for survival under nutrient- or energy-limited conditions. PspE catalyzes the sulfur-transfer reaction from thiosulfate to cyanide, to form sulfite and thiocyanate. Also able to use dithiol (dithiothreitol) as an alternate sulfur acceptor. Also possesses a very low mercaptopyruvate sulfurtransferase activity. In Escherichia coli (strain K12), this protein is Thiosulfate sulfurtransferase PspE (pspE).